A 432-amino-acid chain; its full sequence is Serine hydroxymethyltransferase (432 aa).

(6S)-5,6,7,8-tetrahydrofolate-binding positions include Leu131 and 135–137 (GHL). Lys240 is subject to N6-(pyridoxal phosphate)lysine.

The protein belongs to the SHMT family. As to quaternary structure, homodimer. Pyridoxal 5'-phosphate is required as a cofactor.

The protein localises to the cytoplasm. The enzyme catalyses (6R)-5,10-methylene-5,6,7,8-tetrahydrofolate + glycine + H2O = (6S)-5,6,7,8-tetrahydrofolate + L-serine. It participates in one-carbon metabolism; tetrahydrofolate interconversion. It functions in the pathway amino-acid biosynthesis; glycine biosynthesis; glycine from L-serine: step 1/1. Functionally, catalyzes the reversible interconversion of serine and glycine with tetrahydrofolate (THF) serving as the one-carbon carrier. This reaction serves as the major source of one-carbon groups required for the biosynthesis of purines, thymidylate, methionine, and other important biomolecules. Also exhibits THF-independent aldolase activity toward beta-hydroxyamino acids, producing glycine and aldehydes, via a retro-aldol mechanism. The protein is Serine hydroxymethyltransferase of Acidiphilium cryptum (strain JF-5).